A 242-amino-acid polypeptide reads, in one-letter code: MAAALWGFFPVLLLLLLSGDVQSSEVPGAAAEGSGGSGVGIGDRFKIEGRAVVPGVKPQDWISAARVLVDGEEHVGFLKTDGSFVVHDIPSGSYVVEVVSPAYRFDPVRVDITSKGKMRARYVNYIKTSEVVRLPYPLQMKSSGPPSYFIKRESWGWTDFLMNPMVMMMVLPLLIFVLLPKVVNTSDPDMRREMEQSMNMLNSNHELPDVSEFMTRLFSSKSSGKSSSGSSKTGKSGAGKRR.

A signal peptide spans 1–23; it reads MAAALWGFFPVLLLLLLSGDVQS. Residues 24–159 are Lumenal-facing; sequence SEVPGAAAEG…IKRESWGWTD (136 aa). A helical transmembrane segment spans residues 160–180; that stretch reads FLMNPMVMMMVLPLLIFVLLP. The Cytoplasmic portion of the chain corresponds to 181–242; the sequence is KVVNTSDPDM…TGKSGAGKRR (62 aa). The interval 217–242 is disordered; it reads LFSSKSSGKSSSGSSKTGKSGAGKRR. Residues 219 to 235 show a composition bias toward low complexity; sequence SSKSSGKSSSGSSKTGK.

It belongs to the EMC7 family. In terms of assembly, component of the ER membrane protein complex (EMC).

Its subcellular location is the endoplasmic reticulum membrane. Its function is as follows. Part of the endoplasmic reticulum membrane protein complex (EMC) that enables the energy-independent insertion into endoplasmic reticulum membranes of newly synthesized membrane proteins. Preferentially accommodates proteins with transmembrane domains that are weakly hydrophobic or contain destabilizing features such as charged and aromatic residues. Involved in the cotranslational insertion of multi-pass membrane proteins in which stop-transfer membrane-anchor sequences become ER membrane spanning helices. It is also required for the post-translational insertion of tail-anchored/TA proteins in endoplasmic reticulum membranes. By mediating the proper cotranslational insertion of N-terminal transmembrane domains in an N-exo topology, with translocated N-terminus in the lumen of the ER, controls the topology of multi-pass membrane proteins like the G protein-coupled receptors. By regulating the insertion of various proteins in membranes, it is indirectly involved in many cellular processes. This is Endoplasmic reticulum membrane protein complex subunit 7 (EMC7) from Homo sapiens (Human).